Consider the following 177-residue polypeptide: Small ribosomal subunit protein uS5 (177 aa).

The region spanning 21-84 (LKEKMVSVNR…DEARQRMVRV (64 aa)) is the S5 DRBM domain.

It belongs to the universal ribosomal protein uS5 family. Part of the 30S ribosomal subunit. Contacts proteins S4 and S8.

In terms of biological role, with S4 and S12 plays an important role in translational accuracy. Its function is as follows. Located at the back of the 30S subunit body where it stabilizes the conformation of the head with respect to the body. The protein is Small ribosomal subunit protein uS5 of Nitrosomonas europaea (strain ATCC 19718 / CIP 103999 / KCTC 2705 / NBRC 14298).